A 1832-amino-acid polypeptide reads, in one-letter code: Zinc finger SWIM domain-containing protein 8 (1832 aa).

A phosphoserine mark is found at S36, S48, and S53. Residues 45-67 (RKQSAGPNSPTGGGGGGGSGGTR) are disordered. The segment covering 55–65 (TGGGGGGGSGG) has biased composition (gly residues). Residues 172–208 (YNVAVMFDRCRVTSCSCTCGAGAKWCTHVVALCLFRI) form an SWIM-type zinc finger. Phosphoserine occurs at positions 437 and 564. 3 disordered regions span residues 516 to 722 (PGAS…VGEE), 800 to 821 (NPPDLKVEPPPAKGKKNKVSTS), and 1018 to 1216 (SQTH…TVDV). Positions 563 to 572 (LSAEGGDKAL) are enriched in basic and acidic residues. The span at 1021–1042 (HKPQTLSSFYSSSRPATANQRS) shows a compositional bias: polar residues. Over residues 1121-1132 (SRGGYNGRGWGS) the composition is skewed to gly residues. T1141 is modified (phosphothreonine). The segment covering 1146–1161 (IDSSAPETTSDSSPTL) has biased composition (polar residues). Phosphoserine occurs at positions 1155, 1158, and 1162. A compositionally biased stretch (low complexity) spans 1176 to 1211 (GRGQDSDSISSSSSDSLGSSSSSGSRRASASGGARA). The residue at position 1270 (S1270) is a Phosphoserine. Positions 1435 to 1446 (STAREGATSCSG) are enriched in polar residues. Residues 1435–1465 (STAREGATSCSGSGMRAAGEAGRGLPEGRGA) form a disordered region. Over residues 1455-1465 (AGRGLPEGRGA) the composition is skewed to gly residues. S1831 is modified (phosphoserine).

The protein belongs to the ZSWIM8 family. Component of the SCF-like E3 ubiquitin-protein ligase complex which contains CUL3, RBX1, ELOB, ELOC and ZSWIM8. Interacts with DAB1.

The protein resides in the cytoplasm. The protein localises to the cytosol. It functions in the pathway protein modification; protein ubiquitination. Its function is as follows. Substrate recognition component of a SCF-like E3 ubiquitin-protein ligase complex that promotes target-directed microRNA degradation (TDMD), a process that mediates degradation of microRNAs (miRNAs). The SCF-like E3 ubiquitin-protein ligase complex acts by catalyzing ubiquitination and subsequent degradation of AGO proteins (AGO1, AGO2, AGO3 and/or AGO4), thereby exposing miRNAs for degradation. Specifically recognizes and binds AGO proteins when they are engaged with a TDMD target. May also acts as a regulator of axon guidance: specifically recognizes misfolded ROBO3 and promotes its ubiquitination and subsequent degradation. Plays an essential role for proper embryonic development of heart and lung. Controls protein quality of DAB1, a key signal molecule for brain development, thus protecting its signaling strength. Mechanistically, recognizes intrinsically disordered regions of DAB1 and eliminates misfolded DAB1 that cannot be properly phosphorylated. This chain is Zinc finger SWIM domain-containing protein 8, found in Mus musculus (Mouse).